Reading from the N-terminus, the 120-residue chain is uncharacterized protein (120 aa).

N-linked (GlcNAc...) asparagine; by host glycans are attached at residues Asn-29 and Asn-68. The chain crosses the membrane as a helical span at residues 74 to 94 (IFNGLGFILIVIFIYLLIITL).

It belongs to the asfivirus B117L family.

It is found in the host membrane. The protein resides in the virion. This is an uncharacterized protein from Ornithodoros (relapsing fever ticks).